A 522-amino-acid chain; its full sequence is Leucine-rich repeat transmembrane neuronal protein 1 (522 aa).

A signal peptide spans Met-1–Ala-34. The LRRNT domain occupies Ala-35–Asn-63. The Extracellular segment spans residues Ala-35–Lys-427. Residues Asn-56 and Asn-63 are each glycosylated (N-linked (GlcNAc...) asparagine). LRR repeat units lie at residues Leu-64–Gly-87, Met-89–Lys-111, Leu-112–Pro-135, Pro-137–Gly-159, Arg-161–Asp-183, Cys-184–Gly-207, Phe-209–Arg-231, Ile-233–Val-255, Trp-256–Thr-278, and Val-279–Ser-302. Asn-130 is a glycosylation site (N-linked (GlcNAc...) asparagine). An LRRCT domain is found at Asn-314–Asp-365. The N-linked (GlcNAc...) asparagine glycan is linked to Asn-380. The tract at residues Ser-382 to Gln-401 is disordered. A helical membrane pass occupies residues Val-428–Val-448. At Ser-449–Val-522 the chain is on the cytoplasmic side.

It belongs to the LRRTM family. In terms of tissue distribution, predominantly expressed in forebrain regions including thalamus and cerebral cortex.

The protein resides in the cell membrane. The protein localises to the postsynaptic cell membrane. Its function is as follows. Exhibits strong synaptogenic activity, restricted to excitatory presynaptic differentiation, acting at both pre- and postsynaptic level. This Homo sapiens (Human) protein is Leucine-rich repeat transmembrane neuronal protein 1 (LRRTM1).